The following is a 515-amino-acid chain: Germ cell-less protein-like 1 (515 aa).

Residues 1–35 (MGSLSSRVLRQPRPALAQQAQGARAGGSARRPDTG) form a disordered region. Residues 11-29 (QPRPALAQQAQGARAGGSA) show a composition bias toward low complexity. Positions 49-55 (SHKRKRS) match the Nuclear localization signal motif. The tract at residues 65–85 (DSETDEDEEEGDEQQRLLNTP) is disordered. Phosphoserine is present on S66. Residues 67–76 (ETDEDEEEGD) show a composition bias toward acidic residues. T68 carries the phosphothreonine modification. The Nuclear localization signal motif lies at 85–91 (PRRKKLK). One can recognise a BTB domain in the interval 108 to 178 (SDIKICALGE…LYRDDVLIKP (71 aa)).

Interacts with TMPO-beta, TSG101 and TFDP2. Interacts with EMD.

The protein localises to the nucleus matrix. Possible function in spermatogenesis. Enhances the degradation of MDM2 and increases the amount of p53 probably by modulating the nucleocytoplasmic transport. This chain is Germ cell-less protein-like 1 (GMCL1), found in Homo sapiens (Human).